The sequence spans 385 residues: MSLSTIICIGMAGSGKTTFMQRLNSHLRAEKTPPYVINLDPAVLRVPYGANIDIRDSIKYKKVMENYQLGPNGAIVTSLNLFSTKIDQVIRLVEQKKDKFQNCIIDTPGQIECFVWSASGAIITESFASSFPTVIAYIVDTPRNSSPTTFMSNMLYACSILYKTKLPMIVVFNKTDVCKADFAKEWMTDFESFQAAIKEDQDLNGDNGLGSGYMSSLVNSMSLMLEEFYSQLDVVGVSSFTGDGFDEFMQCVDKKVDEYDQYYKQEREKALNLKKKKEEMRKQKSLNGLMKDLGLNEKSSAAASDNDSIDAISDLEEDANDGLVDRDEDEGVEREYTFPGEERTKGEVNENSAPDLQRRYQEAMQQVGKTASSETAENIAKYIRN.

13–18 is a GTP binding site; it reads GSGKTT. Positions 70–72 match the Gly-Pro-Asn (GPN)-loop; involved in dimer interface motif; it reads GPN. 173–176 contacts GTP; sequence NKTD. Phosphoserine is present on residues Ser-304, Ser-308, and Ser-313. The span at 317–332 shows a compositional bias: acidic residues; that stretch reads EDANDGLVDRDEDEGV. The interval 317–356 is disordered; that stretch reads EDANDGLVDRDEDEGVEREYTFPGEERTKGEVNENSAPDL. Residues 333-348 are compositionally biased toward basic and acidic residues; sequence EREYTFPGEERTKGEV. The residue at position 352 (Ser-352) is a Phosphoserine. A Glycyl lysine isopeptide (Lys-Gly) (interchain with G-Cter in ubiquitin) cross-link involves residue Lys-369.

It belongs to the GPN-loop GTPase family. In terms of assembly, heterodimers with GPN2 or GPN3. Binds to RNA polymerase II (RNAPII) in a GTP-dependent manner. Interacts with nuclear pore protein NUP133 and nuclear export factor CRM1. Interacts with PCL1. In terms of processing, phosphorylated by the cyclin-CDK PCL1-PHO85.

It is found in the cytoplasm. Functionally, small GTPase required for proper nuclear import of RNA polymerase II (RNAPII). May act at an RNAP assembly step prior to nuclear import. Promotes sister chromatid separation during anaphase. The protein is GPN-loop GTPase 1 of Saccharomyces cerevisiae (strain ATCC 204508 / S288c) (Baker's yeast).